The following is a 245-amino-acid chain: Type II restriction enzyme MjaIV (245 aa).

The catalysed reaction is Endonucleolytic cleavage of DNA to give specific double-stranded fragments with terminal 5'-phosphates.. In terms of biological role, a P subtype restriction enzyme that recognizes the double-stranded sequence 5'-GTNNAC-3'; the cleavage site is unknown. The chain is Type II restriction enzyme MjaIV (mjaIVR) from Methanocaldococcus jannaschii (strain ATCC 43067 / DSM 2661 / JAL-1 / JCM 10045 / NBRC 100440) (Methanococcus jannaschii).